Reading from the N-terminus, the 393-residue chain is 2,3,4,5-tetrahydropyridine-2,6-dicarboxylate N-succinyltransferase (393 aa).

E261 serves as the catalytic Acyl-anhydride intermediate. Residues R263, G278, S281, A304, 319 to 320 (DA), G327, K356, and 369 to 372 (RQDS) each bind succinyl-CoA.

This sequence belongs to the type 2 tetrahydrodipicolinate N-succinyltransferase family. In terms of assembly, homotrimer.

Its subcellular location is the cytoplasm. The catalysed reaction is (S)-2,3,4,5-tetrahydrodipicolinate + succinyl-CoA + H2O = (S)-2-succinylamino-6-oxoheptanedioate + CoA. The protein operates within amino-acid biosynthesis; L-lysine biosynthesis via DAP pathway; LL-2,6-diaminopimelate from (S)-tetrahydrodipicolinate (succinylase route): step 1/3. In terms of biological role, catalyzes the conversion of the cyclic tetrahydrodipicolinate (THDP) into the acyclic N-succinyl-L-2-amino-6-oxopimelate using succinyl-CoA. The chain is 2,3,4,5-tetrahydropyridine-2,6-dicarboxylate N-succinyltransferase from Nitratiruptor sp. (strain SB155-2).